The chain runs to 657 residues: Leishmanolysin (657 aa).

A signal peptide spans 1–41 (MSVDSSSSSTHRRRCVAARLVRLAAAGAAVTVAVGTAAAWA). Positions 42 to 102 (HAGALQHRCI…DPRPGSAPTV (61 aa)) are cleaved as a propeptide — activation peptide. Residues 44-611 (GALQHRCIHD…DRMVGLATAA (568 aa)) lie on the Extracellular side of the membrane. Residue N107 is glycosylated (N-linked (GlcNAc...) asparagine). 2 cysteine pairs are disulfide-bonded: C127–C144 and C193–C232. Zn(2+) is bound at residue H266. Residue E267 is part of the active site. H270 lines the Zn(2+) pocket. N302 carries an N-linked (GlcNAc...) asparagine glycan. Intrachain disulfides connect C316–C388, C395–C458, C408–C427, C417–C492, C469–C513, C518–C568, and C538–C561. H336 contributes to the Zn(2+) binding site. N399, N409, N445, N466, and N501 each carry an N-linked (GlcNAc...) asparagine glycan. The helical transmembrane segment at 612–632 (TVLLGMVLSLMALVVVWLLLV) threads the bilayer. Topologically, residues 633 to 657 (SCPWWCCKLGGPPASVTPACSPETE) are cytoplasmic.

The protein belongs to the peptidase M8 family. The cofactor is Zn(2+).

It localises to the membrane. The enzyme catalyses Preference for hydrophobic residues at P1 and P1' and basic residues at P2' and P3'. A model nonapeptide is cleaved at -Ala-Tyr-|-Leu-Lys-Lys-.. Its function is as follows. Has an integral role during the infection of macrophages in the mammalian host. This is Leishmanolysin (mspC) from Leishmania tropica.